The primary structure comprises 856 residues: Lon protease (856 aa).

The region spanning 68-261 (FPVLPLRDIV…KVLGLMESEI (194 aa)) is the Lon N-terminal domain. 412-419 (GPPGVGKT) contacts ATP. The Lon proteolytic domain maps to 647 to 828 (EDQVGVVTGL…DEVLHHALLR (182 aa)). Residues serine 734 and lysine 777 contribute to the active site.

The protein belongs to the peptidase S16 family. Homohexamer. Organized in a ring with a central cavity.

It localises to the cytoplasm. It catalyses the reaction Hydrolysis of proteins in presence of ATP.. ATP-dependent serine protease that mediates the selective degradation of mutant and abnormal proteins as well as certain short-lived regulatory proteins. Required for cellular homeostasis and for survival from DNA damage and developmental changes induced by stress. Degrades polypeptides processively to yield small peptide fragments that are 5 to 10 amino acids long. Binds to DNA in a double-stranded, site-specific manner. This is Lon protease from Azorhizobium caulinodans (strain ATCC 43989 / DSM 5975 / JCM 20966 / LMG 6465 / NBRC 14845 / NCIMB 13405 / ORS 571).